Consider the following 188-residue polypeptide: Der GTPase-activating protein YihI (188 aa).

Disordered stretches follow at residues 1-80 and 162-188; these read MKQP…VPVP and DEDD…KDTF. Positions 27 to 37 are enriched in basic and acidic residues; that stretch reads TRDELDAEARD. Residues 47 to 57 are compositionally biased toward polar residues; sequence NRSGARTNVEG.

The protein belongs to the YihI family. In terms of assembly, interacts with Der.

Its function is as follows. A GTPase-activating protein (GAP) that modifies Der/EngA GTPase function. May play a role in ribosome biogenesis. The protein is Der GTPase-activating protein YihI of Yersinia pseudotuberculosis serotype O:3 (strain YPIII).